The chain runs to 85 residues: Large ribosomal subunit protein bL27 (85 aa).

Residues Met-1–Arg-20 form a disordered region.

Belongs to the bacterial ribosomal protein bL27 family.

The chain is Large ribosomal subunit protein bL27 from Actinobacillus pleuropneumoniae serotype 5b (strain L20).